Here is a 132-residue protein sequence, read N- to C-terminus: Small ribosomal subunit protein uS8 (132 aa).

This sequence belongs to the universal ribosomal protein uS8 family. In terms of assembly, part of the 30S ribosomal subunit. Contacts proteins S5 and S12.

In terms of biological role, one of the primary rRNA binding proteins, it binds directly to 16S rRNA central domain where it helps coordinate assembly of the platform of the 30S subunit. The chain is Small ribosomal subunit protein uS8 from Rhizobium meliloti (strain 1021) (Ensifer meliloti).